The chain runs to 771 residues: Solute carrier family 7 member 14 (771 aa).

A run of 6 helical transmembrane segments spans residues 58 to 78 (LISLGVGSCVGTGMYVVSGLV), 83 to 103 (AGPGVIVSFIIAAVASILSGV), 119 to 141 (AYTYSYVTVGEFVAFFIGWNLIL), 187 to 207 (YPDLLALLIAVIVTIIVALGV), 216 to 236 (VLNVLNLAVWVFIMIAGLFFI), and 251 to 271 (WSGVLQGAATCFYAFIGFDII). N282 is a glycosylation site (N-linked (GlcNAc...) asparagine). Helical transmembrane passes span 291-311 (ASLVICLTAYVSVSVILTLMV), 336-356 (FVVAIGSVAGLTVSLLGSLFP), 360-380 (VIYAMAGDGLLFRFLAHVSSY), 384-404 (PVVACIVSGFLAALLALLVSL), and 407-427 (LIEMMSIGTLLAYTLVSVCVL). S465, S468, and S488 each carry phosphoserine. 4 consecutive transmembrane segments (helical) span residues 565-585 (VTICVLLLFILMFIFCSFIIF), 596-616 (WAILLVVLMVLLISTLVFVIL), 628-648 (MAPCLPFVPAFAMLVNIYLML), and 655-675 (WIRFAVWCFVGLLIYFGYGIW). An N-linked (GlcNAc...) asparagine glycan is attached at N676. The tract at residues 736–771 (DAKANGRTSSKAKSKSKHKQNSEALIANDELDYSPE) is disordered. Over residues 745 to 754 (SKAKSKSKHK) the composition is skewed to basic residues. A phosphoserine mark is found at S757 and S769.

Belongs to the amino acid-polyamine-organocation (APC) superfamily. Cationic amino acid transporter (CAT) (TC 2.A.3.3) family. As to expression, expressed in skin fibroblasts.

It is found in the lysosome membrane. It catalyses the reaction 4-aminobutanoate(in) = 4-aminobutanoate(out). Functionally, imports 4-aminobutanoate (GABA) into lysosomes. May act as a GABA sensor that regulates mTORC2-dependent INS signaling and gluconeogenesis. The transport mechanism and substrate selectivity remain to be elucidated. This Homo sapiens (Human) protein is Solute carrier family 7 member 14.